Consider the following 485-residue polypeptide: ATP synthase subunit beta (485 aa).

Residue 170 to 177 (GGAGVGKT) participates in ATP binding.

This sequence belongs to the ATPase alpha/beta chains family. As to quaternary structure, F-type ATPases have 2 components, CF(1) - the catalytic core - and CF(0) - the membrane proton channel. CF(1) has five subunits: alpha(3), beta(3), gamma(1), delta(1), epsilon(1). CF(0) has three main subunits: a(1), b(2) and c(9-12). The alpha and beta chains form an alternating ring which encloses part of the gamma chain. CF(1) is attached to CF(0) by a central stalk formed by the gamma and epsilon chains, while a peripheral stalk is formed by the delta and b chains.

Its subcellular location is the cell membrane. It carries out the reaction ATP + H2O + 4 H(+)(in) = ADP + phosphate + 5 H(+)(out). Functionally, produces ATP from ADP in the presence of a proton gradient across the membrane. The catalytic sites are hosted primarily by the beta subunits. The sequence is that of ATP synthase subunit beta from Salinispora arenicola (strain CNS-205).